Reading from the N-terminus, the 447-residue chain is N-succinylarginine dihydrolase (447 aa).

Substrate is bound by residues alanine 19–serine 28, asparagine 110, and histidine 137–arginine 138. Glutamate 174 is a catalytic residue. A substrate-binding site is contributed by arginine 212. Histidine 248 is a catalytic residue. Substrate is bound by residues aspartate 250 and asparagine 359. Cysteine 365 acts as the Nucleophile in catalysis.

It belongs to the succinylarginine dihydrolase family. Homodimer.

It catalyses the reaction N(2)-succinyl-L-arginine + 2 H2O + 2 H(+) = N(2)-succinyl-L-ornithine + 2 NH4(+) + CO2. It functions in the pathway amino-acid degradation; L-arginine degradation via AST pathway; L-glutamate and succinate from L-arginine: step 2/5. Its function is as follows. Catalyzes the hydrolysis of N(2)-succinylarginine into N(2)-succinylornithine, ammonia and CO(2). The chain is N-succinylarginine dihydrolase from Escherichia coli (strain ATCC 8739 / DSM 1576 / NBRC 3972 / NCIMB 8545 / WDCM 00012 / Crooks).